A 668-amino-acid chain; its full sequence is Bestrophin-3 (668 aa).

Topologically, residues 1-31 (MTVTYSSKVANATFFGFHRLLLKWRGSIYKL) are cytoplasmic. A10 contributes to the Ca(2+) binding site. A helical transmembrane segment spans residues 32–51 (LYREFIVFAVLYTAISLVYR). Residues 52–60 (LLLTGVQKR) lie on the Extracellular side of the membrane. Residues 61–82 (YFEKLSIYCDRYAEQIPVTFVL) form a helical membrane-spanning segment. Over 83–237 (GFYVTLVVNR…DWVGIPLVYT (155 aa)) the chain is Cytoplasmic. Residues 238–255 (QVVTLAVYTFFFACLIGR) traverse the membrane as a helical segment. The Extracellular segment spans residues 256–274 (QFLDPTKGYAGHDLDLYIP). A helical transmembrane segment spans residues 275–288 (IFTLLQFFFYAGWL). Residues 289-668 (KVAEQLINPF…LNKETEESPK (380 aa)) lie on the Cytoplasmic side of the membrane. Ca(2+) is bound by residues Q293, N296, D301, and D304. 3 disordered regions span residues 400 to 454 (SAHE…KKSC), 473 to 493 (RETS…VRTS), and 532 to 570 (TGVQ…VSAS). A compositionally biased stretch (basic and acidic residues) spans 425–436 (PRDDLSPARDLL). Residues 475-489 (TSQTSTLQSLTPQSS) are compositionally biased toward low complexity. Polar residues predominate over residues 532–545 (TGVQPSKTEQQQGP).

It belongs to the anion channel-forming bestrophin (TC 1.A.46) family. Calcium-sensitive chloride channel subfamily. Present in skeletal muscle and weakly in brain, spinal cord, bone marrow and retina.

Its subcellular location is the cell membrane. The enzyme catalyses chloride(in) = chloride(out). In terms of biological role, ligand-gated anion channel that allows the movement of chloride monoatomic anions across cell membranes when activated by calcium (Ca2+). The polypeptide is Bestrophin-3 (Homo sapiens (Human)).